The primary structure comprises 372 residues: Alanine dehydrogenase (372 aa).

Arginine 15 and lysine 75 together coordinate substrate. Histidine 96 (proton donor/acceptor) is an active-site residue. NAD(+) contacts are provided by residues serine 134, 178–179 (IA), aspartate 198, serine 220, 239–240 (VL), 267–270 (IAID), arginine 280, and 299–302 (VANM). The active-site Proton donor/acceptor is aspartate 270.

Belongs to the AlaDH/PNT family. In terms of assembly, homohexamer.

The protein localises to the cytoplasm. The catalysed reaction is L-alanine + NAD(+) + H2O = pyruvate + NH4(+) + NADH + H(+). The protein operates within amino-acid degradation; L-alanine degradation via dehydrogenase pathway; NH(3) and pyruvate from L-alanine: step 1/1. Its activity is regulated as follows. Inhibited by p-chloromercuribenzoate and HgCl(2) and by Cu(2+) and Pb(2+) salts, unaffected by amino acids such as D-alanine and beta-alanine or by nucleotides or nucleosides. Its function is as follows. Catalyzes the reversible reductive amination of pyruvate to L-alanine. Prefers L-alanine for oxidative deamination, other substrates are poorly reactive. In the other direction 2-oxobutyrate is almost as reactive as pyruvate. Ammonia is the sole amino donor for the reductive amination of pyruvate, NADPH is inert. Reductive amination proceeds through a sequential, ordered ternary-binary mechanism, where NADH binds first followed by ammonia and pyruvate; the products are released in the order L-alanine and NAD(+). A key factor in the assimilation of L-alanine as an energy source via the tricarboxylic acid cycle during sporulation. In Lysinibacillus sphaericus (Bacillus sphaericus), this protein is Alanine dehydrogenase (ald).